An 81-amino-acid chain; its full sequence is uncharacterized protein (81 aa).

Residues 1–16 (MNRLTFYGLCLSGAVG) form the signal peptide. Residues 55-81 (TIDPHHNHHDDHHDSHGHGHGKIKGHH) form a disordered region. Residues 57–71 (DPHHNHHDDHHDSHG) are compositionally biased toward basic and acidic residues. Over residues 72–81 (HGHGKIKGHH) the composition is skewed to basic residues.

The protein resides in the secreted. This is an uncharacterized protein from Dictyostelium discoideum (Social amoeba).